Reading from the N-terminus, the 292-residue chain is NAD kinase (292 aa).

Aspartate 72 acts as the Proton acceptor in catalysis. Residues 72 to 73 (DG), 146 to 147 (NE), histidine 157, arginine 174, aspartate 176, and 187 to 192 (TAYSLS) each bind NAD(+).

This sequence belongs to the NAD kinase family. A divalent metal cation is required as a cofactor.

It is found in the cytoplasm. The catalysed reaction is NAD(+) + ATP = ADP + NADP(+) + H(+). Involved in the regulation of the intracellular balance of NAD and NADP, and is a key enzyme in the biosynthesis of NADP. Catalyzes specifically the phosphorylation on 2'-hydroxyl of the adenosine moiety of NAD to yield NADP. This is NAD kinase from Shewanella woodyi (strain ATCC 51908 / MS32).